We begin with the raw amino-acid sequence, 306 residues long: Lipoyl synthase (306 aa).

Residues C55, C60, C66, C81, C85, C88, and S294 each coordinate [4Fe-4S] cluster. Residues 67 to 283 form the Radical SAM core domain; the sequence is WNHRTATFLL…RAYALARGFR (217 aa).

This sequence belongs to the radical SAM superfamily. Lipoyl synthase family. [4Fe-4S] cluster serves as cofactor.

The protein localises to the cytoplasm. It catalyses the reaction [[Fe-S] cluster scaffold protein carrying a second [4Fe-4S](2+) cluster] + N(6)-octanoyl-L-lysyl-[protein] + 2 oxidized [2Fe-2S]-[ferredoxin] + 2 S-adenosyl-L-methionine + 4 H(+) = [[Fe-S] cluster scaffold protein] + N(6)-[(R)-dihydrolipoyl]-L-lysyl-[protein] + 4 Fe(3+) + 2 hydrogen sulfide + 2 5'-deoxyadenosine + 2 L-methionine + 2 reduced [2Fe-2S]-[ferredoxin]. Its pathway is protein modification; protein lipoylation via endogenous pathway; protein N(6)-(lipoyl)lysine from octanoyl-[acyl-carrier-protein]: step 2/2. Functionally, catalyzes the radical-mediated insertion of two sulfur atoms into the C-6 and C-8 positions of the octanoyl moiety bound to the lipoyl domains of lipoate-dependent enzymes, thereby converting the octanoylated domains into lipoylated derivatives. This chain is Lipoyl synthase, found in Chloroflexus aggregans (strain MD-66 / DSM 9485).